The primary structure comprises 189 residues: Movement protein p22 (189 aa).

Belongs to the tombusvirus/aureusvirus movement protein p22 family. Interacts with host protein HFI22. Post-translationally, phosphorylated.

The protein resides in the host membrane. In terms of biological role, cell-to-cell movement. Displays RNA-binding activity. This chain is Movement protein p22, found in Capsicum annuum (Capsicum pepper).